The primary structure comprises 463 residues: Glutamate--tRNA ligase 2 (463 aa).

Positions 10-20 (PSPTGFLHIGS) match the 'HIGH' region motif. A 'KMSKS' region motif is present at residues 239 to 243 (KLSKR). Position 242 (lysine 242) interacts with ATP.

Belongs to the class-I aminoacyl-tRNA synthetase family. Glutamate--tRNA ligase type 1 subfamily. Monomer.

Its subcellular location is the cytoplasm. It catalyses the reaction tRNA(Glu) + L-glutamate + ATP = L-glutamyl-tRNA(Glu) + AMP + diphosphate. In terms of biological role, catalyzes the attachment of glutamate to tRNA(Glu) in a two-step reaction: glutamate is first activated by ATP to form Glu-AMP and then transferred to the acceptor end of tRNA(Glu). The polypeptide is Glutamate--tRNA ligase 2 (Rickettsia felis (strain ATCC VR-1525 / URRWXCal2) (Rickettsia azadi)).